Reading from the N-terminus, the 126-residue chain is Large ribosomal subunit protein uL14 (126 aa).

The protein belongs to the universal ribosomal protein uL14 family. In terms of assembly, part of the 50S ribosomal subunit. Forms a cluster with proteins L3 and L19. In the 70S ribosome, L14 and L19 interact and together make contacts with the 16S rRNA in bridges B5 and B8.

Functionally, binds to 23S rRNA. Forms part of two intersubunit bridges in the 70S ribosome. This is Large ribosomal subunit protein uL14 from Persephonella marina (strain DSM 14350 / EX-H1).